A 196-amino-acid polypeptide reads, in one-letter code: Nucleoid occlusion factor SlmA (196 aa).

The region spanning 7 to 68 (TNRREEILQA…GLIEFIEDSI (62 aa)) is the HTH tetR-type domain. The H-T-H motif DNA-binding region spans 31 to 50 (TTAKLAAQVGVSEAALYRHF). Positions 115–142 (EQDRLQSRINQLFERIETQLRQVLRERK) form a coiled coil.

Belongs to the nucleoid occlusion factor SlmA family. As to quaternary structure, homodimer. Interacts with FtsZ.

The protein resides in the cytoplasm. It is found in the nucleoid. Required for nucleoid occlusion (NO) phenomenon, which prevents Z-ring formation and cell division over the nucleoid. Acts as a DNA-associated cell division inhibitor that binds simultaneously chromosomal DNA and FtsZ, and disrupts the assembly of FtsZ polymers. SlmA-DNA-binding sequences (SBS) are dispersed on non-Ter regions of the chromosome, preventing FtsZ polymerization at these regions. In Photobacterium profundum (strain SS9), this protein is Nucleoid occlusion factor SlmA.